The chain runs to 441 residues: ATP-dependent protease ATPase subunit HslU (441 aa).

Residues Val-18, 60–65 (GVGKTE), Asp-253, Glu-319, and Arg-391 contribute to the ATP site.

It belongs to the ClpX chaperone family. HslU subfamily. As to quaternary structure, a double ring-shaped homohexamer of HslV is capped on each side by a ring-shaped HslU homohexamer. The assembly of the HslU/HslV complex is dependent on binding of ATP.

The protein resides in the cytoplasm. ATPase subunit of a proteasome-like degradation complex; this subunit has chaperone activity. The binding of ATP and its subsequent hydrolysis by HslU are essential for unfolding of protein substrates subsequently hydrolyzed by HslV. HslU recognizes the N-terminal part of its protein substrates and unfolds these before they are guided to HslV for hydrolysis. The chain is ATP-dependent protease ATPase subunit HslU from Nitratidesulfovibrio vulgaris (strain DP4) (Desulfovibrio vulgaris).